The primary structure comprises 86 residues: Cytochrome c6 (86 aa).

Heme c contacts are provided by Cys14, Cys17, His18, and Met58.

It belongs to the cytochrome c family. PetJ subfamily. Monomer. Binds 1 heme c group covalently per subunit.

The protein resides in the cellular thylakoid lumen. Functions as an electron carrier between membrane-bound cytochrome b6-f and photosystem I in oxygenic photosynthesis. In Anabaena variabilis, this protein is Cytochrome c6 (petJ).